Here is a 264-residue protein sequence, read N- to C-terminus: Undecaprenyl-diphosphatase (264 aa).

8 consecutive transmembrane segments (helical) span residues 7-27, 45-65, 86-106, 109-129, 145-165, 186-206, 215-235, and 244-264; these read IVIP…PVSS, TKIL…LFFY, IHVL…YNKI, LFNP…LIIA, INLV…YPGF, VNFS…LDLI, LNIP…FLLI, and KVSL…IYFI.

It belongs to the UppP family.

Its subcellular location is the cell membrane. The enzyme catalyses di-trans,octa-cis-undecaprenyl diphosphate + H2O = di-trans,octa-cis-undecaprenyl phosphate + phosphate + H(+). In terms of biological role, catalyzes the dephosphorylation of undecaprenyl diphosphate (UPP). Confers resistance to bacitracin. The protein is Undecaprenyl-diphosphatase of Buchnera aphidicola subsp. Schizaphis graminum (strain Sg).